Here is a 365-residue protein sequence, read N- to C-terminus: tRNA 2-selenouridine synthase (365 aa).

A Rhodanese domain is found at 16-138 (FLLKTPLIDL…LRRYLINVID (123 aa)). Residue cysteine 98 is the S-selanylcysteine intermediate of the active site.

The protein belongs to the SelU family. In terms of assembly, monomer.

The enzyme catalyses 5-methylaminomethyl-2-thiouridine(34) in tRNA + selenophosphate + (2E)-geranyl diphosphate + H2O + H(+) = 5-methylaminomethyl-2-selenouridine(34) in tRNA + (2E)-thiogeraniol + phosphate + diphosphate. It catalyses the reaction 5-methylaminomethyl-2-thiouridine(34) in tRNA + (2E)-geranyl diphosphate = 5-methylaminomethyl-S-(2E)-geranyl-thiouridine(34) in tRNA + diphosphate. The catalysed reaction is 5-methylaminomethyl-S-(2E)-geranyl-thiouridine(34) in tRNA + selenophosphate + H(+) = 5-methylaminomethyl-2-(Se-phospho)selenouridine(34) in tRNA + (2E)-thiogeraniol. It carries out the reaction 5-methylaminomethyl-2-(Se-phospho)selenouridine(34) in tRNA + H2O = 5-methylaminomethyl-2-selenouridine(34) in tRNA + phosphate. Functionally, involved in the post-transcriptional modification of the uridine at the wobble position (U34) of tRNA(Lys), tRNA(Glu) and tRNA(Gln). Catalyzes the conversion of 2-thiouridine (S2U-RNA) to 2-selenouridine (Se2U-RNA). Acts in a two-step process involving geranylation of 2-thiouridine (S2U) to S-geranyl-2-thiouridine (geS2U) and subsequent selenation of the latter derivative to 2-selenouridine (Se2U) in the tRNA chain. The polypeptide is tRNA 2-selenouridine synthase (Psychromonas ingrahamii (strain DSM 17664 / CCUG 51855 / 37)).